We begin with the raw amino-acid sequence, 123 residues long: ATP synthase epsilon chain (123 aa).

It belongs to the ATPase epsilon chain family. F-type ATPases have 2 components, CF(1) - the catalytic core - and CF(0) - the membrane proton channel. CF(1) has five subunits: alpha(3), beta(3), gamma(1), delta(1), epsilon(1). CF(0) has three main subunits: a, b and c.

It localises to the cell inner membrane. Functionally, produces ATP from ADP in the presence of a proton gradient across the membrane. This chain is ATP synthase epsilon chain, found in Helicobacter pylori (strain G27).